The sequence spans 761 residues: Xaa-Pro dipeptidyl-peptidase (761 aa).

Active-site charge relay system residues include Ser347, Asp467, and His497.

This sequence belongs to the peptidase S15 family. Homodimer.

The protein localises to the cytoplasm. The catalysed reaction is Hydrolyzes Xaa-Pro-|- bonds to release unblocked, N-terminal dipeptides from substrates including Ala-Pro-|-p-nitroanilide and (sequentially) Tyr-Pro-|-Phe-Pro-|-Gly-Pro-|-Ile.. Its function is as follows. Removes N-terminal dipeptides sequentially from polypeptides having unsubstituted N-termini provided that the penultimate residue is proline. In Streptococcus agalactiae serotype V (strain ATCC BAA-611 / 2603 V/R), this protein is Xaa-Pro dipeptidyl-peptidase.